The sequence spans 702 residues: Elongation factor G (702 aa).

A tr-type G domain is found at 8 to 290; that stretch reads HRVRNIGIAA…AVAMYLPAPT (283 aa). GTP is bound by residues 17–24, 87–91, and 141–144; these read AHIDAGKT, DTPGH, and NKMD.

It belongs to the TRAFAC class translation factor GTPase superfamily. Classic translation factor GTPase family. EF-G/EF-2 subfamily.

The protein resides in the cytoplasm. Its function is as follows. Catalyzes the GTP-dependent ribosomal translocation step during translation elongation. During this step, the ribosome changes from the pre-translocational (PRE) to the post-translocational (POST) state as the newly formed A-site-bound peptidyl-tRNA and P-site-bound deacylated tRNA move to the P and E sites, respectively. Catalyzes the coordinated movement of the two tRNA molecules, the mRNA and conformational changes in the ribosome. The polypeptide is Elongation factor G (Aliarcobacter butzleri (strain RM4018) (Arcobacter butzleri)).